The sequence spans 343 residues: Cytoplasmic tRNA 2-thiolation protein 1 (343 aa).

This sequence belongs to the TtcA family. CTU1/NCS6/ATPBD3 subfamily.

It localises to the cytoplasm. Its pathway is tRNA modification; 5-methoxycarbonylmethyl-2-thiouridine-tRNA biosynthesis. Plays a central role in 2-thiolation of mcm(5)S(2)U at tRNA wobble positions of tRNA(Lys), tRNA(Glu) and tRNA(Gln). Directly binds tRNAs and probably acts by catalyzing adenylation of tRNAs, an intermediate required for 2-thiolation. It is unclear whether it acts as a sulfurtransferase that transfers sulfur from thiocarboxylated URM1 onto the uridine of tRNAs at wobble position. The polypeptide is Cytoplasmic tRNA 2-thiolation protein 1 (Drosophila erecta (Fruit fly)).